Here is a 239-residue protein sequence, read N- to C-terminus: Aldehyde dehydrogenase, dimeric NADP-preferring (239 aa).

Cys-30 is a catalytic residue.

The protein belongs to the aldehyde dehydrogenase family. As to quaternary structure, homodimer.

Its subcellular location is the cytoplasm. The enzyme catalyses an aldehyde + NAD(+) + H2O = a carboxylate + NADH + 2 H(+). The catalysed reaction is octanal + NAD(+) + H2O = octanoate + NADH + 2 H(+). ALDHs play a major role in the detoxification of alcohol-derived acetaldehyde. They are involved in the metabolism of corticosteroids, biogenic amines, neurotransmitters, and lipid peroxidation. Oxidizes medium and long chain aldehydes into non-toxic fatty acids. Preferentially oxidizes aromatic aldehyde substrates. Comprises about 50 percent of corneal epithelial soluble proteins. May play a role in preventing corneal damage caused by ultraviolet light. The chain is Aldehyde dehydrogenase, dimeric NADP-preferring (ALDH3A1) from Bos taurus (Bovine).